Reading from the N-terminus, the 65-residue chain is Sarcoplasmic/endoplasmic reticulum calcium ATPase regulator ARLN (65 aa).

Residue methionine 1 is modified to N-acetylmethionine. A disordered region spans residues 1–38 (MEVGQAASGTDGVRERRGSSAARRRSQDEPVQSGMNGI). Phosphoserine is present on residues serine 19 and serine 26. A helical membrane pass occupies residues 44–64 (WLDLWLFILFDLALFIFVYLL).

Homooligomer. Can also form heterooligomers with other sarcoplasmic/endoplasmic reticulum calcium ATPase (SERCA) regulators ERLN, PLN, SLN and STRIT1/DWORF. Monomer. Interacts as a monomer with ATP2A2/SERCA2; the interaction results in inhibition of ATP2A2 Ca(2+) affinity.

The protein localises to the endoplasmic reticulum membrane. Its function is as follows. Inhibits the activity of the calcium ATPases ATP2A2/SERCA2 and ATP2A3/SERCA3 by decreasing their apparent affinity for Ca(2+). This chain is Sarcoplasmic/endoplasmic reticulum calcium ATPase regulator ARLN (Arln), found in Rattus norvegicus (Rat).